The sequence spans 348 residues: Probable mitochondrial adenine nucleotide transporter BTL1 (348 aa).

Solcar repeat units follow at residues 46–129 (SREA…VKRA), 157–241 (SWIS…MKTS), and 251–338 (LSRP…WKDI). 6 helical membrane-spanning segments follow: residues 52 to 72 (FLSG…LETI), 104 to 124 (GNEI…GTFE), 156 to 176 (ISWI…STLV), 213 to 233 (FYAG…CYYF), 256 to 276 (MLVL…PLEV), and 321 to 341 (VMPS…ILLA).

It belongs to the mitochondrial carrier (TC 2.A.29) family.

The protein localises to the mitochondrion inner membrane. Functionally, probable mitochondrial adenylate carrier that catalyzes the transport of ATP, ADP and AMP. The protein is Probable mitochondrial adenine nucleotide transporter BTL1 of Arabidopsis thaliana (Mouse-ear cress).